Consider the following 807-residue polypeptide: Histone transcription regulator slm9 (807 aa).

2 WD repeats span residues 62–100 (SFDS…KAFQ) and 102–140 (LSGP…ETIV). Residues 144–164 (EHADSNHQPAVSIEESKEAVE) form a disordered region. WD repeat units follow at residues 182–221 (GHHT…VEKS), 230–273 (PTGN…YDIN), 276–322 (GHQG…PMAV), and 326–367 (LSCS…EKMD). Residues 388 to 437 (NKNAAADRTTSPTQGQPESPSKSILLRPPPSIASSPESKRRKCPKKFVAR) form a disordered region. A compositionally biased stretch (polar residues) spans 395-409 (RTTSPTQGQPESPSK). A phosphoserine mark is found at serine 406, serine 421, and serine 422. Over residues 426 to 435 (KRRKCPKKFV) the composition is skewed to basic residues. WD repeat units follow at residues 492–526 (DCSW…YIYS) and 528–574 (AGRL…AIHS).

It belongs to the WD repeat HIR1 family. As to quaternary structure, interacts with hip1 and hip3.

The protein resides in the cytoplasm. It is found in the nucleus. In terms of biological role, probably required for replication-independent chromatin assembly. Required for transcriptional silencing in the outer repeat (otr) centromeric repeats and the Tf2 long terminal repeat retrotransposons. May play an indirect role in the regulation of cdc2 and/or wee1 at the G2/M stage of mitosis. This chain is Histone transcription regulator slm9 (slm9), found in Schizosaccharomyces pombe (strain 972 / ATCC 24843) (Fission yeast).